A 309-amino-acid chain; its full sequence is Protein EXORDIUM-like 1 (309 aa).

A signal peptide spans 1–23 (MASFVMGYFLLFAVAFMCLDART).

Belongs to the EXORDIUM family.

The protein resides in the secreted. It localises to the extracellular space. The protein localises to the apoplast. In terms of biological role, may play a role in a brassinosteroid-dependent regulatory pathway that controls growth and development under low carbon and energy availability. This chain is Protein EXORDIUM-like 1 (EXL1), found in Arabidopsis thaliana (Mouse-ear cress).